The following is a 341-amino-acid chain: UDP-N-acetylenolpyruvoylglucosamine reductase (341 aa).

The 173-residue stretch at 19 to 191 folds into the FAD-binding PCMH-type domain; the sequence is MAVRAAHFCQ…TAVRFRLSRR (173 aa). Arg167 is an active-site residue. The active-site Proton donor is Ser241. The active site involves Glu337.

Belongs to the MurB family. FAD serves as cofactor.

Its subcellular location is the cytoplasm. The enzyme catalyses UDP-N-acetyl-alpha-D-muramate + NADP(+) = UDP-N-acetyl-3-O-(1-carboxyvinyl)-alpha-D-glucosamine + NADPH + H(+). It participates in cell wall biogenesis; peptidoglycan biosynthesis. Its function is as follows. Cell wall formation. This Chromobacterium violaceum (strain ATCC 12472 / DSM 30191 / JCM 1249 / CCUG 213 / NBRC 12614 / NCIMB 9131 / NCTC 9757 / MK) protein is UDP-N-acetylenolpyruvoylglucosamine reductase.